The following is a 532-amino-acid chain: MGSVPDPGELTELAQPSFEEFQKQTSLMTSCTLLWQELSDHFTSLEQNLMKKSEALKQMIETLDNQTQTSLESLKRREVTIDHSVEIVAGKVGERARAALESLEKARDGCGDGSNDDSGDVDDEEGLLSALKSLCLKMDARGFWNFVTARKKELENLRSKIPAALVDCVDPAMLVLEAISEVFPVDTRGDKVSNDYGWACVVILESLTPVIVDPVIGKSRLLVTPSVKEKAKEIAETWKKSLEERGRIENVKTPDVHTFLQHLVTFGIVKSEDLALYRKLVVGSAWRKQMPKLAVSVGLGDQMPDMIEELISRGQQLDAVHFTYEVGLVDKFPPVPLLKAYLRDAKKSAASIMEDSSNTGRATHLVARKEQSALKAVLKCIEEYKLEEEFPPENLKKRLDQLEKTKTEKRKPAAVPANKRTRASYNGPMPPAKAGRITNAYVSSFPFIRSPSHSPQYASPAAYPSPPTTVYSNRSPPYPYSPEIIPGSYQGSPIGYPAYNGYCNGPVPAPAPPVYHPHHHQHHQFHHQQHYY.

Residues 406–432 are disordered; sequence KTEKRKPAAVPANKRTRASYNGPMPPA.

Belongs to the Frigida family. In terms of tissue distribution, expressed in leaves, shoot apex, flowers and during seed development.

In Arabidopsis thaliana (Mouse-ear cress), this protein is FRIGIDA-like protein 4a (FRL4A).